The following is a 60-amino-acid chain: UPF0337 protein SACOL1680 (60 aa).

It belongs to the UPF0337 (CsbD) family.

This is UPF0337 protein SACOL1680 from Staphylococcus aureus (strain COL).